Consider the following 241-residue polypeptide: tRNA pseudouridine synthase B (241 aa).

The active-site Nucleophile is Asp45.

It belongs to the pseudouridine synthase TruB family. Type 1 subfamily.

It catalyses the reaction uridine(55) in tRNA = pseudouridine(55) in tRNA. Its function is as follows. Responsible for synthesis of pseudouridine from uracil-55 in the psi GC loop of transfer RNAs. This chain is tRNA pseudouridine synthase B, found in Opitutus terrae (strain DSM 11246 / JCM 15787 / PB90-1).